The primary structure comprises 305 residues: Probable GTP 3',8-cyclase (305 aa).

One can recognise a Radical SAM core domain in the interval 6–228; that stretch reads NHRRPLVSLR…MTRKFMQDRK (223 aa). R15 contacts GTP. Positions 22 and 26 each coordinate [4Fe-4S] cluster. Y28 is an S-adenosyl-L-methionine binding site. A [4Fe-4S] cluster-binding site is contributed by C29. GTP is bound at residue R62. An S-adenosyl-L-methionine-binding site is contributed by G66. Residue T92 coordinates GTP. S116 is an S-adenosyl-L-methionine binding site. K153 contacts GTP. The [4Fe-4S] cluster site is built by C249 and C252. 254-256 provides a ligand contact to GTP; it reads RLR. C266 serves as a coordination point for [4Fe-4S] cluster.

The protein belongs to the radical SAM superfamily. MoaA family. [4Fe-4S] cluster is required as a cofactor.

The enzyme catalyses GTP + AH2 + S-adenosyl-L-methionine = (8S)-3',8-cyclo-7,8-dihydroguanosine 5'-triphosphate + 5'-deoxyadenosine + L-methionine + A + H(+). It participates in cofactor biosynthesis; molybdopterin biosynthesis. In terms of biological role, catalyzes the cyclization of GTP to (8S)-3',8-cyclo-7,8-dihydroguanosine 5'-triphosphate. This chain is Probable GTP 3',8-cyclase, found in Methanothermobacter marburgensis (strain ATCC BAA-927 / DSM 2133 / JCM 14651 / NBRC 100331 / OCM 82 / Marburg) (Methanobacterium thermoautotrophicum).